A 295-amino-acid polypeptide reads, in one-letter code: Hepatic leukemia factor (295 aa).

The segment covering 36–52 (PEDAFSKEKDKGKKLDD) has biased composition (basic and acidic residues). Disordered stretches follow at residues 36 to 76 (PEDA…TLPY) and 92 to 149 (LSEN…SPIR). In terms of domain architecture, bZIP spans 225–288 (DDKYWARRRK…GKCKNILAKY (64 aa)). The interval 227-247 (KYWARRRKNNMAAKRSRDARR) is basic motif. Residues 248–255 (LKENQIAI) form a leucine-zipper region.

It belongs to the bZIP family. PAR subfamily. In terms of assembly, binds DNA specifically as homodimer or heterodimer with other PAR factors.

The protein localises to the nucleus. This is Hepatic leukemia factor (Hlf) from Mus musculus (Mouse).